A 116-amino-acid polypeptide reads, in one-letter code: NAD(P)H-quinone oxidoreductase subunit M (116 aa).

Belongs to the complex I NdhM subunit family. As to quaternary structure, NDH-1 can be composed of about 15 different subunits; different subcomplexes with different compositions have been identified which probably have different functions.

The protein localises to the cellular thylakoid membrane. The catalysed reaction is a plastoquinone + NADH + (n+1) H(+)(in) = a plastoquinol + NAD(+) + n H(+)(out). The enzyme catalyses a plastoquinone + NADPH + (n+1) H(+)(in) = a plastoquinol + NADP(+) + n H(+)(out). Its function is as follows. NDH-1 shuttles electrons from an unknown electron donor, via FMN and iron-sulfur (Fe-S) centers, to quinones in the respiratory and/or the photosynthetic chain. The immediate electron acceptor for the enzyme in this species is believed to be plastoquinone. Couples the redox reaction to proton translocation, and thus conserves the redox energy in a proton gradient. Cyanobacterial NDH-1 also plays a role in inorganic carbon-concentration. This is NAD(P)H-quinone oxidoreductase subunit M from Synechococcus sp. (strain RCC307).